The following is a 396-amino-acid chain: S-adenosylmethionine synthase (396 aa).

H16 contacts ATP. D18 contacts Mg(2+). E44 contributes to the K(+) binding site. The L-methionine site is built by E57 and Q100. The interval 100 to 110 (QSVDINQGVDR) is flexible loop. Residues 165-167 (DAK), D240, 246-247 (RK), A263, and K267 contribute to the ATP site. D240 is a binding site for L-methionine. K271 contacts L-methionine.

It belongs to the AdoMet synthase family. As to quaternary structure, homotetramer; dimer of dimers. The cofactor is Mg(2+). It depends on K(+) as a cofactor.

The protein resides in the cytoplasm. The catalysed reaction is L-methionine + ATP + H2O = S-adenosyl-L-methionine + phosphate + diphosphate. It functions in the pathway amino-acid biosynthesis; S-adenosyl-L-methionine biosynthesis; S-adenosyl-L-methionine from L-methionine: step 1/1. Catalyzes the formation of S-adenosylmethionine (AdoMet) from methionine and ATP. The overall synthetic reaction is composed of two sequential steps, AdoMet formation and the subsequent tripolyphosphate hydrolysis which occurs prior to release of AdoMet from the enzyme. In Pseudomonas aeruginosa (strain UCBPP-PA14), this protein is S-adenosylmethionine synthase.